A 262-amino-acid chain; its full sequence is Adenosylcobinamide-GDP ribazoletransferase (262 aa).

Transmembrane regions (helical) follow at residues 43 to 63 (YFGL…WLTQ), 66 to 86 (LPAG…TGGF), 120 to 140 (GALA…ELAL), 146 to 166 (AGSA…SIIF), 191 to 211 (LLIL…LAAL), and 242 to 262 (AAQQ…GNIL).

Belongs to the CobS family. The cofactor is Mg(2+).

It is found in the cell inner membrane. It carries out the reaction alpha-ribazole + adenosylcob(III)inamide-GDP = adenosylcob(III)alamin + GMP + H(+). The catalysed reaction is alpha-ribazole 5'-phosphate + adenosylcob(III)inamide-GDP = adenosylcob(III)alamin 5'-phosphate + GMP + H(+). It participates in cofactor biosynthesis; adenosylcobalamin biosynthesis; adenosylcobalamin from cob(II)yrinate a,c-diamide: step 7/7. Functionally, joins adenosylcobinamide-GDP and alpha-ribazole to generate adenosylcobalamin (Ado-cobalamin). Also synthesizes adenosylcobalamin 5'-phosphate from adenosylcobinamide-GDP and alpha-ribazole 5'-phosphate. This chain is Adenosylcobinamide-GDP ribazoletransferase, found in Shewanella baltica (strain OS155 / ATCC BAA-1091).